The sequence spans 461 residues: Cyclin-A2-4 (461 aa).

The protein belongs to the cyclin family. Cyclin AB subfamily.

The polypeptide is Cyclin-A2-4 (CYCA2-4) (Arabidopsis thaliana (Mouse-ear cress)).